The primary structure comprises 231 residues: Quercetin 2,3-dioxygenase (231 aa).

Residues His57, His59, His101, and Glu103 each coordinate a divalent metal cation.

The protein belongs to the pirin family. Requires Zn(2+) as cofactor. The cofactor is Co(2+). Fe(2+) serves as cofactor.

The catalysed reaction is quercetin + O2 = 2-(3,4-dihydroxybenzoyloxy)-4,6-dihydroxybenzoate + CO. It participates in flavonoid metabolism; quercetin degradation. With respect to regulation, inhibited by kojic acid, sodium diethyldithiocarbamate and 1,10-phenanthroline monohydrochloride. Its function is as follows. Has quercetin 2,3-dioxygenase activity in vitro. Its physiological role is unknown; however, may provide a mechanism that would avoid inhibition of key cellular proteins, such as DNA gyrase, by quercetin. The protein is Quercetin 2,3-dioxygenase (yhhW) of Escherichia coli (strain K12).